Here is a 655-residue protein sequence, read N- to C-terminus: p-hydroxybenzoic acid efflux pump subunit AaeB (655 aa).

Transmembrane regions (helical) follow at residues 13-33 (FAVK…HFQL), 38-58 (WAVL…GGEP), 69-89 (LRII…IAMI), 93-113 (LLMI…SSLV), 121-141 (WGLA…EPLL), 152-172 (EIVV…PRSI), 370-390 (LFWL…IAVV), 407-427 (FIYG…VIIP), 431-451 (QSML…GIEV), and 481-501 (LFLD…TVIL).

This sequence belongs to the aromatic acid exporter ArAE (TC 2.A.85) family.

Its subcellular location is the cell inner membrane. In terms of biological role, forms an efflux pump with AaeA. Could function as a metabolic relief valve, allowing to eliminate certain compounds when they accumulate to high levels in the cell. This chain is p-hydroxybenzoic acid efflux pump subunit AaeB, found in Escherichia fergusonii (strain ATCC 35469 / DSM 13698 / CCUG 18766 / IAM 14443 / JCM 21226 / LMG 7866 / NBRC 102419 / NCTC 12128 / CDC 0568-73).